The sequence spans 108 residues: Trissin (108 aa).

The N-terminal stretch at 1–29 (MTKTTMHWLAHFQIILLCIWLMCPPSSQA) is a signal peptide. 3 disulfide bridges follow: Cys32-Cys43, Cys35-Cys52, and Cys39-Cys51. The propeptide occupies 57 to 108 (RKRSDPDALRQSSNRRLIDFILLQGRALFTQELRERRHNGTLMDLGLNTYYP).

It localises to the secreted. Activates the G-protein coupled receptor TrissinR in vitro, leading to increased intracellular calcium ion levels. This is Trissin from Drosophila melanogaster (Fruit fly).